Consider the following 78-residue polypeptide: Large ribosomal subunit protein eL38 (78 aa).

The protein belongs to the eukaryotic ribosomal protein eL38 family. Component of the large ribosomal subunit (LSU). Mature yeast ribosomes consist of a small (40S) and a large (60S) subunit. The 40S small subunit contains 1 molecule of ribosomal RNA (18S rRNA) and 33 different proteins (encoded by 57 genes). The large 60S subunit contains 3 rRNA molecules (25S, 5.8S and 5S rRNA) and 46 different proteins (encoded by 81 genes).

It localises to the cytoplasm. Its function is as follows. Component of the ribosome, a large ribonucleoprotein complex responsible for the synthesis of proteins in the cell. The small ribosomal subunit (SSU) binds messenger RNAs (mRNAs) and translates the encoded message by selecting cognate aminoacyl-transfer RNA (tRNA) molecules. The large subunit (LSU) contains the ribosomal catalytic site termed the peptidyl transferase center (PTC), which catalyzes the formation of peptide bonds, thereby polymerizing the amino acids delivered by tRNAs into a polypeptide chain. The nascent polypeptides leave the ribosome through a tunnel in the LSU and interact with protein factors that function in enzymatic processing, targeting, and the membrane insertion of nascent chains at the exit of the ribosomal tunnel. The protein is Large ribosomal subunit protein eL38 of Saccharomyces cerevisiae (strain ATCC 204508 / S288c) (Baker's yeast).